We begin with the raw amino-acid sequence, 685 residues long: Heat shock protein homolog SSE1 (685 aa).

Residues 651 to 685 are disordered; it reads QALRSNQEASKMADLSAKLAAQRKAEAEAKENAKE. Positions 673 to 685 are enriched in basic and acidic residues; sequence RKAEAEAKENAKE.

The protein belongs to the heat shock protein 70 family.

Its subcellular location is the cytoplasm. The chain is Heat shock protein homolog SSE1 (SSE1) from Naumovozyma castellii (Yeast).